Here is a 477-residue protein sequence, read N- to C-terminus: Bifunctional protein HldE (477 aa).

Residues 1-318 (MKVTLPEFER…ENAVRGRAET (318 aa)) are ribokinase. 195–198 (NLSE) is an ATP binding site. The active site involves aspartate 264. A cytidylyltransferase region spans residues 344 to 477 (MTNGVFDILH…IKKIQKDSDK (134 aa)).

The protein in the N-terminal section; belongs to the carbohydrate kinase PfkB family. It in the C-terminal section; belongs to the cytidylyltransferase family. In terms of assembly, homodimer.

The catalysed reaction is D-glycero-beta-D-manno-heptose 7-phosphate + ATP = D-glycero-beta-D-manno-heptose 1,7-bisphosphate + ADP + H(+). It catalyses the reaction D-glycero-beta-D-manno-heptose 1-phosphate + ATP + H(+) = ADP-D-glycero-beta-D-manno-heptose + diphosphate. Its pathway is nucleotide-sugar biosynthesis; ADP-L-glycero-beta-D-manno-heptose biosynthesis; ADP-L-glycero-beta-D-manno-heptose from D-glycero-beta-D-manno-heptose 7-phosphate: step 1/4. It functions in the pathway nucleotide-sugar biosynthesis; ADP-L-glycero-beta-D-manno-heptose biosynthesis; ADP-L-glycero-beta-D-manno-heptose from D-glycero-beta-D-manno-heptose 7-phosphate: step 3/4. Functionally, catalyzes the phosphorylation of D-glycero-D-manno-heptose 7-phosphate at the C-1 position to selectively form D-glycero-beta-D-manno-heptose-1,7-bisphosphate. Its function is as follows. Catalyzes the ADP transfer from ATP to D-glycero-beta-D-manno-heptose 1-phosphate, yielding ADP-D-glycero-beta-D-manno-heptose. The chain is Bifunctional protein HldE from Klebsiella pneumoniae subsp. pneumoniae (strain ATCC 700721 / MGH 78578).